We begin with the raw amino-acid sequence, 309 residues long: S-antigen protein (309 aa).

The N-terminal stretch at 1-23 (MNRILSVSFYLFFLYLYIYKTYG) is a signal peptide. The disordered stretch occupies residues 52 to 309 (GKGNKYEDLQ…KSIMNMLILM (258 aa)). Residues 60 to 86 (LQEEGEGENDDEEHSNSEESDNDEENE) show a composition bias toward acidic residues. The span at 93 to 259 (EAPKSDEAEA…DEAEARKSEA (167 aa)) shows a compositional bias: basic and acidic residues. The segment at 97 to 256 (SDEAEALKSD…RKSDEAEARK (160 aa)) is 20 X 8 AA approximate tandem repeats of A-[RL]-K-S-D-E-A-E. 2 consecutive repeat copies span residues 257 to 271 (SEAG…GGPG) and 272 to 286 (SEAG…GGPG). A 2 X 15 AA tandem repeats of S-E-A-G-T-E-G-P-K-G-T-G-G-P-G region spans residues 257–286 (SEAGTEGPKGTGGPGSEAGTEGPKGTGGPG). Gly residues predominate over residues 263 to 289 (GPKGTGGPGSEAGTEGPKGTGGPGSGG).

Its subcellular location is the parasitophorous vacuole. Its function is as follows. S antigens are soluble heat-stable proteins present in the sera of some infected individuals. This chain is S-antigen protein, found in Plasmodium falciparum (isolate NF7 / Ghana).